Consider the following 135-residue polypeptide: MAEKFDNLEDHLEKFVENIRQLGIIVSDFQPSSQAGLNQKLNFLVRGLQDIDKCRQQLHDITVPLEVFDYIDQGRNPQLYTKECLERALAKNEQVKGKIDTLKKFKSLLIQELSKVFPEDMAKYKAVRGEDHPPS.

Belongs to the Mediator complex subunit 10 family. In terms of assembly, component of the Mediator complex.

The protein resides in the nucleus. Component of the Mediator complex, a coactivator involved in the regulated transcription of nearly all RNA polymerase II-dependent genes. Mediator functions as a bridge to convey information from gene-specific regulatory proteins to the basal RNA polymerase II transcription machinery. Mediator is recruited to promoters by direct interactions with regulatory proteins and serves as a scaffold for the assembly of a functional preinitiation complex with RNA polymerase II and the general transcription factors. The polypeptide is Mediator of RNA polymerase II transcription subunit 10 (med10) (Xenopus laevis (African clawed frog)).